Consider the following 157-residue polypeptide: DNA gyrase inhibitor 2 (157 aa).

The protein belongs to the DNA gyrase inhibitor family. Interacts with DNA gyrase.

It localises to the cytoplasm. Its function is as follows. Inhibits the supercoiling activity of DNA gyrase. Acts by inhibiting DNA gyrase at an early step, prior to (or at the step of) binding of DNA by the gyrase. It protects cells against toxins that target DNA gyrase, by inhibiting activity of these toxins and reducing the formation of lethal double-strand breaks in the cell. This Dickeya dadantii (strain 3937) (Erwinia chrysanthemi (strain 3937)) protein is DNA gyrase inhibitor 2.